Consider the following 149-residue polypeptide: Urease accessory protein UreE (149 aa).

This sequence belongs to the UreE family.

The protein localises to the cytoplasm. Functionally, involved in urease metallocenter assembly. Binds nickel. Probably functions as a nickel donor during metallocenter assembly. This is Urease accessory protein UreE from Ureaplasma urealyticum serovar 10 (strain ATCC 33699 / Western).